The chain runs to 241 residues: Phosphoadenosine 5'-phosphosulfate reductase (241 aa).

Catalysis depends on cysteine 235, which acts as the Nucleophile; cysteine thiosulfonate intermediate.

The protein belongs to the PAPS reductase family. CysH subfamily.

The protein localises to the cytoplasm. The enzyme catalyses [thioredoxin]-disulfide + sulfite + adenosine 3',5'-bisphosphate + 2 H(+) = [thioredoxin]-dithiol + 3'-phosphoadenylyl sulfate. It functions in the pathway sulfur metabolism; hydrogen sulfide biosynthesis; sulfite from sulfate: step 3/3. In terms of biological role, catalyzes the formation of sulfite from phosphoadenosine 5'-phosphosulfate (PAPS) using thioredoxin as an electron donor. In Xanthomonas axonopodis pv. citri (strain 306), this protein is Phosphoadenosine 5'-phosphosulfate reductase.